Consider the following 541-residue polypeptide: Membrane protein insertase YidC (541 aa).

The helical transmembrane segment at S6–D26 threads the bilayer. Residues E34 to I56 form a disordered region. A run of 4 helical transmembrane segments spans residues F337–V357, L416–F436, L454–L474, and P495–V515.

This sequence belongs to the OXA1/ALB3/YidC family. Type 1 subfamily. In terms of assembly, interacts with the Sec translocase complex via SecD. Specifically interacts with transmembrane segments of nascent integral membrane proteins during membrane integration.

It is found in the cell inner membrane. Functionally, required for the insertion and/or proper folding and/or complex formation of integral membrane proteins into the membrane. Involved in integration of membrane proteins that insert both dependently and independently of the Sec translocase complex, as well as at least some lipoproteins. Aids folding of multispanning membrane proteins. This Haemophilus influenzae (strain 86-028NP) protein is Membrane protein insertase YidC.